The sequence spans 443 residues: UDP-N-acetylglucosamine 1-carboxyvinyltransferase 1 (443 aa).

22 to 23 (KN) lines the phosphoenolpyruvate pocket. Residue R95 coordinates UDP-N-acetyl-alpha-D-glucosamine. C119 (proton donor) is an active-site residue. Position 119 is a 2-(S-cysteinyl)pyruvic acid O-phosphothioketal (C119). Residues 124 to 128 (RPIDL), D308, and V330 contribute to the UDP-N-acetyl-alpha-D-glucosamine site.

It belongs to the EPSP synthase family. MurA subfamily.

It is found in the cytoplasm. It carries out the reaction phosphoenolpyruvate + UDP-N-acetyl-alpha-D-glucosamine = UDP-N-acetyl-3-O-(1-carboxyvinyl)-alpha-D-glucosamine + phosphate. It participates in cell wall biogenesis; peptidoglycan biosynthesis. Its function is as follows. Cell wall formation. Adds enolpyruvyl to UDP-N-acetylglucosamine. This Oceanobacillus iheyensis (strain DSM 14371 / CIP 107618 / JCM 11309 / KCTC 3954 / HTE831) protein is UDP-N-acetylglucosamine 1-carboxyvinyltransferase 1.